The following is a 400-amino-acid chain: Acetylornithine aminotransferase (400 aa).

Pyridoxal 5'-phosphate-binding positions include 102–103 (GA) and F135. A N(2)-acetyl-L-ornithine-binding site is contributed by R138. Residue 220–223 (DEVQ) coordinates pyridoxal 5'-phosphate. The residue at position 249 (K249) is an N6-(pyridoxal phosphate)lysine. N(2)-acetyl-L-ornithine is bound at residue S276. T277 contributes to the pyridoxal 5'-phosphate binding site.

Belongs to the class-III pyridoxal-phosphate-dependent aminotransferase family. ArgD subfamily. Homodimer. Pyridoxal 5'-phosphate is required as a cofactor.

The protein resides in the cytoplasm. It catalyses the reaction N(2)-acetyl-L-ornithine + 2-oxoglutarate = N-acetyl-L-glutamate 5-semialdehyde + L-glutamate. It functions in the pathway amino-acid biosynthesis; L-arginine biosynthesis; N(2)-acetyl-L-ornithine from L-glutamate: step 4/4. In Gloeobacter violaceus (strain ATCC 29082 / PCC 7421), this protein is Acetylornithine aminotransferase.